Here is a 362-residue protein sequence, read N- to C-terminus: Phosphoserine aminotransferase (362 aa).

Arg43 contributes to the L-glutamate binding site. Pyridoxal 5'-phosphate-binding positions include 77 to 78 (AT), Trp103, Thr153, Asp173, and Gln196. Lys197 carries the post-translational modification N6-(pyridoxal phosphate)lysine. Residue 238–239 (NT) participates in pyridoxal 5'-phosphate binding.

It belongs to the class-V pyridoxal-phosphate-dependent aminotransferase family. SerC subfamily. Homodimer. Pyridoxal 5'-phosphate serves as cofactor.

The protein localises to the cytoplasm. The enzyme catalyses O-phospho-L-serine + 2-oxoglutarate = 3-phosphooxypyruvate + L-glutamate. It carries out the reaction 4-(phosphooxy)-L-threonine + 2-oxoglutarate = (R)-3-hydroxy-2-oxo-4-phosphooxybutanoate + L-glutamate. It participates in amino-acid biosynthesis; L-serine biosynthesis; L-serine from 3-phospho-D-glycerate: step 2/3. The protein operates within cofactor biosynthesis; pyridoxine 5'-phosphate biosynthesis; pyridoxine 5'-phosphate from D-erythrose 4-phosphate: step 3/5. Catalyzes the reversible conversion of 3-phosphohydroxypyruvate to phosphoserine and of 3-hydroxy-2-oxo-4-phosphonooxybutanoate to phosphohydroxythreonine. This Xylella fastidiosa (strain Temecula1 / ATCC 700964) protein is Phosphoserine aminotransferase.